The chain runs to 376 residues: TelA-like protein SERP0976 (376 aa).

It belongs to the TelA family.

The chain is TelA-like protein SERP0976 from Staphylococcus epidermidis (strain ATCC 35984 / DSM 28319 / BCRC 17069 / CCUG 31568 / BM 3577 / RP62A).